The sequence spans 147 residues: Large ribosomal subunit protein uL13 (147 aa).

Belongs to the universal ribosomal protein uL13 family. As to quaternary structure, part of the 50S ribosomal subunit.

Functionally, this protein is one of the early assembly proteins of the 50S ribosomal subunit, although it is not seen to bind rRNA by itself. It is important during the early stages of 50S assembly. The protein is Large ribosomal subunit protein uL13 of Levilactobacillus brevis (strain ATCC 367 / BCRC 12310 / CIP 105137 / JCM 1170 / LMG 11437 / NCIMB 947 / NCTC 947) (Lactobacillus brevis).